The following is a 102-amino-acid chain: MIVPFEHVLILAGILFALGLVCVLVWRMNLIMLLIGIEVMLNAAMLAFVGGAARWGMADGQVFSLVIMALTSAEVSLALAMVVYLHRRKRTVDADEFSELKG.

Helical transmembrane passes span 5 to 25, 30 to 50, and 65 to 85; these read FEHV…CVLV, LIML…AFVG, and LVIM…VVYL.

This sequence belongs to the complex I subunit 4L family. As to quaternary structure, NDH-1 is composed of 14 different subunits. Subunits NuoA, H, J, K, L, M, N constitute the membrane sector of the complex.

The protein localises to the cell inner membrane. It carries out the reaction a quinone + NADH + 5 H(+)(in) = a quinol + NAD(+) + 4 H(+)(out). Its function is as follows. NDH-1 shuttles electrons from NADH, via FMN and iron-sulfur (Fe-S) centers, to quinones in the respiratory chain. The immediate electron acceptor for the enzyme in this species is believed to be ubiquinone. Couples the redox reaction to proton translocation (for every two electrons transferred, four hydrogen ions are translocated across the cytoplasmic membrane), and thus conserves the redox energy in a proton gradient. The sequence is that of NADH-quinone oxidoreductase subunit K 1 from Geobacter metallireducens (strain ATCC 53774 / DSM 7210 / GS-15).